The sequence spans 88 residues: MSILSALTSISNPMKSSKSSVANGGGRLSMGSNSVACGSCGGGSSSSGTINNADGSKTTYYTYTSPIYTYNYSYSYSSSGSSSSCGCH.

The segment covering 1-14 has biased composition (polar residues); that stretch reads MSILSALTSISNPM. The interval 1–26 is disordered; that stretch reads MSILSALTSISNPMKSSKSSVANGGG.

This sequence belongs to the hssA/B family.

The chain is HssA/B-like protein 9 (hssl9) from Dictyostelium discoideum (Social amoeba).